The chain runs to 69 residues: uncharacterized protein (69 aa).

This is an uncharacterized protein from Treponema pallidum (strain Nichols).